Reading from the N-terminus, the 139-residue chain is ATP synthase epsilon chain (139 aa).

The protein belongs to the ATPase epsilon chain family. As to quaternary structure, F-type ATPases have 2 components, CF(1) - the catalytic core - and CF(0) - the membrane proton channel. CF(1) has five subunits: alpha(3), beta(3), gamma(1), delta(1), epsilon(1). CF(0) has three main subunits: a, b and c.

It is found in the cell inner membrane. In terms of biological role, produces ATP from ADP in the presence of a proton gradient across the membrane. The polypeptide is ATP synthase epsilon chain (Pseudomonas putida (strain ATCC 47054 / DSM 6125 / CFBP 8728 / NCIMB 11950 / KT2440)).